A 468-amino-acid chain; its full sequence is MSASLTAEQKDQKSSVKRPLNSFMLYRRDRQAEIPTSNHQSISRIIGQLWRNESAQVKKYYSDLSALERQKHMLENPEYKYTPKKRSTVRRRHKKVSPSSGSFVASDYVVLQQIAQSSKTLKQTEPEKPVNEEETLAALLAPALSYPKSGKSNLIETSELSCLSSSPMIRSHTIPSLSFTDQVSTTISTLDKSEQAPSSLGIYYRSPSSGSPIGRTKSVCLANKARIVPKRSMSSDGCVDKSYQMSKTPSLEANLPQNSSNCSARRVPKFDSKGTVSEQSNSDSPELSADKVLSHCSPIDARPSTPSCPNASISPKTPNTGDHYGFDGAEYLGTPLSVGSTTAYLYGQETELLSTPYCHTSYPAMSRLNSSSGYTCVSSSSVTNSGHTENNTWRSDEQSKGFVDINSFSQSLFSNGNYEFAAHSQELDDLFSQITDFTSTDPIASSLKDANSLGPSLLEPWLPNSNLF.

The disordered stretch occupies residues M1 to N21. Positions V16–K80 form a DNA-binding region, HMG box. The residue at position 173 (T173) is a Phosphothreonine. A phosphoserine mark is found at S209, S211, and S218. 2 stretches are compositionally biased toward polar residues: residues P249–S263 and G274–P285. A disordered region spans residues P249–D290.

Post-translationally, phosphorylation results in inactivation.

Its subcellular location is the nucleus. It localises to the cytoplasm. In terms of biological role, key transcription factor for sexual development. Activates the transcription of the matp, matm, mei2, mfm, ste6 and rgs1 genes. Binds specifically to a DNA fragment carrying a 10-base motif 5'-TTCTTTGTTY-3'. This is Transcription factor ste11 (ste11) from Schizosaccharomyces pombe (strain 972 / ATCC 24843) (Fission yeast).